The following is a 346-amino-acid chain: Phosphoribosylformylglycinamidine cyclo-ligase (346 aa).

This sequence belongs to the AIR synthase family.

It is found in the cytoplasm. The enzyme catalyses 2-formamido-N(1)-(5-O-phospho-beta-D-ribosyl)acetamidine + ATP = 5-amino-1-(5-phospho-beta-D-ribosyl)imidazole + ADP + phosphate + H(+). The protein operates within purine metabolism; IMP biosynthesis via de novo pathway; 5-amino-1-(5-phospho-D-ribosyl)imidazole from N(2)-formyl-N(1)-(5-phospho-D-ribosyl)glycinamide: step 2/2. This Bacillus thuringiensis subsp. konkukian (strain 97-27) protein is Phosphoribosylformylglycinamidine cyclo-ligase.